The primary structure comprises 314 residues: Lysophospholipase D GDPD1 (314 aa).

The Extracellular segment spans residues 1–3 (MSS). The chain crosses the membrane as a helical span at residues 4-24 (TAAFCLLSTLGGYLVTSFLLL). At 25 to 195 (KYPALLHQRK…VDKCYKENSD (171 aa)) the chain is on the cytoplasmic side. Residues 40–309 (SRHISHRGGA…DYPTKLKDFL (270 aa)) enclose the GP-PDE domain. Glu72, Asp74, and His87 together coordinate a divalent metal cation. The helical transmembrane segment at 196-216 (IPILFSLQRVLLILGLFFTGL) threads the bilayer. At 217 to 314 (LPFVPIREQF…LKDFLNNFSA (98 aa)) the chain is on the extracellular side.

The protein belongs to the glycerophosphoryl diester phosphodiesterase family. In terms of tissue distribution, widely expressed.

The protein resides in the cytoplasm. The protein localises to the membrane. It localises to the perinuclear region. It is found in the endoplasmic reticulum. The catalysed reaction is 1-hexadecanoyl-sn-glycero-3-phosphocholine + H2O = 1-hexadecanoyl-sn-glycero-3-phosphate + choline + H(+). It catalyses the reaction 1-hexadecanoyl-sn-glycero-3-phosphoethanolamine + H2O = 1-hexadecanoyl-sn-glycero-3-phosphate + ethanolamine + H(+). The enzyme catalyses N-hexadecanoyl-sn-glycero-3-phosphoethanolamine + H2O = N-hexadecanoylethanolamine + sn-glycerol 3-phosphate + H(+). It carries out the reaction N-(5Z,8Z,11Z,14Z-eicosatetraenoyl)-1-(9Z-octadecenoyl)-sn-glycero-3-phosphoethanolamine + H2O = N-(5Z,8Z,11Z,14Z-eicosatetraenoyl)-ethanolamine + 1-(9Z-octadecenoyl)-sn-glycero-3-phosphate + H(+). The catalysed reaction is N,1-di-(9Z-octadecenoyl)-sn-glycero-3-phosphoethanolamine + H2O = N-(9Z-octadecenoyl) ethanolamine + 1-(9Z-octadecenoyl)-sn-glycero-3-phosphate + H(+). It catalyses the reaction N-hexadecanoyl-1-(9Z-octadecenoyl)-sn-glycero-3-phosphoethanolamine + H2O = N-hexadecanoylethanolamine + 1-(9Z-octadecenoyl)-sn-glycero-3-phosphate + H(+). The enzyme catalyses a 1-O-alkyl-sn-glycero-3-phosphocholine + H2O = a 1-O-alkyl-sn-glycero-3-phosphate + choline + H(+). It carries out the reaction 1-O-hexadecyl-sn-glycero-3-phosphocholine + H2O = 1-O-hexadecyl-sn-glycero-3-phosphate + choline + H(+). The catalysed reaction is 1-(9Z-octadecenoyl)-sn-glycero-3-phosphocholine + H2O = 1-(9Z-octadecenoyl)-sn-glycero-3-phosphate + choline + H(+). It catalyses the reaction N,1-dihexadecanoyl-sn-glycero-3-phosphoethanolamine + H2O = N-hexadecanoylethanolamine + 1-hexadecanoyl-sn-glycero-3-phosphate + H(+). The enzyme catalyses 1-O-(1Z-octadecenyl)-sn-glycero-3-phospho-(N-5Z,8Z,11Z,14Z-eicosatetraenoyl)-ethanolamine + H2O = 1-O-(1Z-octadecenyl)-sn-glycero-3-phosphate + N-(5Z,8Z,11Z,14Z-eicosatetraenoyl)-ethanolamine + H(+). It carries out the reaction 1-O-(1Z-octadecenyl)-sn-glycero-3-phospho-(N-9Z-octadecenoyl)-ethanolamine + H2O = 1-O-(1Z-octadecenyl)-sn-glycero-3-phosphate + N-(9Z-octadecenoyl) ethanolamine + H(+). The catalysed reaction is 1-O-(1Z-octadecenyl)-sn-glycero-3-phospho-N-hexadecanoyl-ethanolamine + H2O = 1-O-(1Z-octadecenyl)-sn-glycero-3-phosphate + N-hexadecanoylethanolamine + H(+). With respect to regulation, lysophospholipase D activity is increased by magnesium and manganese and inhibited by calcium in a concentration dependent manner. Loss of lysophospholipase D activity by addition of EDTA. Functionally, hydrolyzes lysoglycerophospholipids to produce lysophosphatidic acid (LPA) and the corresponding amines. Shows a preference for 1-O-alkyl-sn-glycero-3-phosphocholine (lyso-PAF), lysophosphatidylethanolamine (lyso-PE) and lysophosphatidylcholine (lyso-PC). May be involved in bioactive N-acylethanolamine biosynthesis from both N-acyl-lysoplasmenylethanolamin (N-acyl-lysoPlsEt) and N-acyl-lysophosphatidylethanolamin (N-acyl-lysoPE). In addition, hydrolyzes glycerophospho-N-acylethanolamine to N-acylethanolamine. Does not display glycerophosphodiester phosphodiesterase activity, since it cannot hydrolyze either glycerophosphoinositol or glycerophosphocholine. The protein is Lysophospholipase D GDPD1 of Mus musculus (Mouse).